A 160-amino-acid polypeptide reads, in one-letter code: S-ribosylhomocysteine lyase (160 aa).

Fe cation contacts are provided by H57, H61, and C127.

This sequence belongs to the LuxS family. In terms of assembly, homodimer. The cofactor is Fe cation.

The catalysed reaction is S-(5-deoxy-D-ribos-5-yl)-L-homocysteine = (S)-4,5-dihydroxypentane-2,3-dione + L-homocysteine. Its function is as follows. Involved in the synthesis of autoinducer 2 (AI-2) which is secreted by bacteria and is used to communicate both the cell density and the metabolic potential of the environment. The regulation of gene expression in response to changes in cell density is called quorum sensing. Catalyzes the transformation of S-ribosylhomocysteine (RHC) to homocysteine (HC) and 4,5-dihydroxy-2,3-pentadione (DPD). The sequence is that of S-ribosylhomocysteine lyase from Streptococcus suis (strain 98HAH33).